A 508-amino-acid chain; its full sequence is GMP synthase [glutamine-hydrolyzing] (508 aa).

A Glutamine amidotransferase type-1 domain is found at 1–189; the sequence is MILVLDFGSQ…ALLVCGCEKT (189 aa). The Nucleophile role is filled by Cys-78. Active-site residues include His-163 and Glu-165. Positions 190-383 constitute a GMPS ATP-PPase domain; sequence WGMQHFAQRE…LGVSQDFLMR (194 aa). 217–223 contributes to the ATP binding site; sequence SGGVDST.

Homodimer.

It carries out the reaction XMP + L-glutamine + ATP + H2O = GMP + L-glutamate + AMP + diphosphate + 2 H(+). The protein operates within purine metabolism; GMP biosynthesis; GMP from XMP (L-Gln route): step 1/1. Functionally, catalyzes the synthesis of GMP from XMP. This is GMP synthase [glutamine-hydrolyzing] (guaA) from Helicobacter pylori (strain ATCC 700392 / 26695) (Campylobacter pylori).